Consider the following 250-residue polypeptide: Ubiquinone/menaquinone biosynthesis C-methyltransferase UbiE (250 aa).

S-adenosyl-L-methionine-binding positions include Ser-73, Asp-94, and 122-123; that span reads NA.

The protein belongs to the class I-like SAM-binding methyltransferase superfamily. MenG/UbiE family.

It carries out the reaction a 2-demethylmenaquinol + S-adenosyl-L-methionine = a menaquinol + S-adenosyl-L-homocysteine + H(+). The enzyme catalyses a 2-methoxy-6-(all-trans-polyprenyl)benzene-1,4-diol + S-adenosyl-L-methionine = a 5-methoxy-2-methyl-3-(all-trans-polyprenyl)benzene-1,4-diol + S-adenosyl-L-homocysteine + H(+). Its pathway is quinol/quinone metabolism; menaquinone biosynthesis; menaquinol from 1,4-dihydroxy-2-naphthoate: step 2/2. It functions in the pathway cofactor biosynthesis; ubiquinone biosynthesis. In terms of biological role, methyltransferase required for the conversion of demethylmenaquinol (DMKH2) to menaquinol (MKH2) and the conversion of 2-polyprenyl-6-methoxy-1,4-benzoquinol (DDMQH2) to 2-polyprenyl-3-methyl-6-methoxy-1,4-benzoquinol (DMQH2). In Legionella pneumophila (strain Paris), this protein is Ubiquinone/menaquinone biosynthesis C-methyltransferase UbiE.